Here is a 146-residue protein sequence, read N- to C-terminus: Protein MGF 100-3L (146 aa).

The protein belongs to the asfivirus MGF 100 family.

Functionally, plays a role in virus cell tropism, and may be required for efficient virus replication in macrophages. This is Protein MGF 100-3L from Ornithodoros (relapsing fever ticks).